We begin with the raw amino-acid sequence, 151 residues long: NPC intracellular cholesterol transporter 2 (151 aa).

Residues methionine 1–alanine 19 form the signal peptide. 3 disulfide bridges follow: cysteine 27–cysteine 140, cysteine 42–cysteine 47, and cysteine 93–cysteine 99. Asparagine 58 carries N-linked (GlcNAc...) asparagine glycosylation. Lysine 116 is modified (N6-acetyllysine). Asparagine 135 carries an N-linked (GlcNAc...) asparagine glycan.

Belongs to the NPC2 family. As to quaternary structure, interacts with NPC1 (via the second lumenal domain) in a cholestrol-dependent manner. Interacts with NUS1/NgBR, the interaction stabilizes NCP2 and regulates cholesterol trafficking. Interacts with DHDDS. Interacts with NEDD4L (via C2 domain). Interacts with NPC1L1. As to expression, detected in gallbladder bile. Detected in fibroblasts, kidney, liver, spleen, small intestine, placenta and testis (at protein level). Epididymis.

It is found in the secreted. The protein localises to the endoplasmic reticulum. Its subcellular location is the lysosome. It catalyses the reaction cholesterol(in) = cholesterol(out). Its function is as follows. Intracellular cholesterol transporter which acts in concert with NPC1 and plays an important role in the egress of cholesterol from the lysosomal compartment. Unesterified cholesterol that has been released from LDLs in the lumen of the late endosomes/lysosomes is transferred by NPC2 to the cholesterol-binding pocket in the N-terminal domain of NPC1. May bind and mobilize cholesterol that is associated with membranes. NPC2 binds cholesterol with a 1:1 stoichiometry. Can bind a variety of sterols, including lathosterol, desmosterol and the plant sterols stigmasterol and beta-sitosterol. The secreted form of NCP2 regulates biliary cholesterol secretion via stimulation of ABCG5/ABCG8-mediated cholesterol transport. The protein is NPC intracellular cholesterol transporter 2 of Homo sapiens (Human).